The following is a 358-amino-acid chain: Cytochrome c peroxidase, mitochondrial (358 aa).

The N-terminal 38 residues, 1 to 38 (MAASRTATRTLRALRTSTRPALTAAPRAAFRQGGRRLY), are a transit peptide targeting the mitochondrion. Histidine 119 acts as the Proton acceptor in catalysis. The segment at 192–214 (PYRPGRQDRDAAGCTPDGRLPDA) is disordered. Heme b is bound at residue histidine 242. Tryptophan 258 functions as the Tryptophan radical intermediate in the catalytic mechanism.

The protein belongs to the peroxidase family. Cytochrome c peroxidase subfamily. Forms a one-to-one complex with cytochrome c. Heme b serves as cofactor.

Its subcellular location is the mitochondrion matrix. It localises to the mitochondrion intermembrane space. It carries out the reaction 2 Fe(II)-[cytochrome c] + H2O2 + 2 H(+) = 2 Fe(III)-[cytochrome c] + 2 H2O. Destroys radicals which are normally produced within the cells and which are toxic to biological systems. The sequence is that of Cytochrome c peroxidase, mitochondrial (ccp-1) from Neurospora crassa (strain ATCC 24698 / 74-OR23-1A / CBS 708.71 / DSM 1257 / FGSC 987).